The sequence spans 175 residues: Large ribosomal subunit protein uL22y (175 aa).

Positions 153–163 (EKEEPVKKEPE) are enriched in basic and acidic residues. Positions 153 to 175 (EKEEPVKKEPETQLAAKSKKSAA) are disordered.

Belongs to the universal ribosomal protein uL22 family.

This chain is Large ribosomal subunit protein uL22y (RPL17B), found in Arabidopsis thaliana (Mouse-ear cress).